The chain runs to 196 residues: Peptidyl-tRNA hydrolase (196 aa).

A tRNA-binding site is contributed by Tyr18. Residue His23 is the Proton acceptor of the active site. TRNA contacts are provided by Phe69, Asn71, and Asn117.

Belongs to the PTH family. As to quaternary structure, monomer.

It localises to the cytoplasm. The enzyme catalyses an N-acyl-L-alpha-aminoacyl-tRNA + H2O = an N-acyl-L-amino acid + a tRNA + H(+). Its function is as follows. Hydrolyzes ribosome-free peptidyl-tRNAs (with 1 or more amino acids incorporated), which drop off the ribosome during protein synthesis, or as a result of ribosome stalling. In terms of biological role, catalyzes the release of premature peptidyl moieties from peptidyl-tRNA molecules trapped in stalled 50S ribosomal subunits, and thus maintains levels of free tRNAs and 50S ribosomes. This Vibrio vulnificus (strain CMCP6) protein is Peptidyl-tRNA hydrolase.